The sequence spans 213 residues: uncharacterized protein (213 aa).

This is an uncharacterized protein from Magallana gigas (Pacific oyster).